The following is a 138-amino-acid chain: Large ribosomal subunit protein uL16 (138 aa).

The segment covering 1-13 (MLQPARRKYRKEQ) has biased composition (basic residues). The disordered stretch occupies residues 1–21 (MLQPARRKYRKEQKGRNTGIA).

Belongs to the universal ribosomal protein uL16 family. As to quaternary structure, part of the 50S ribosomal subunit.

Its function is as follows. Binds 23S rRNA and is also seen to make contacts with the A and possibly P site tRNAs. The polypeptide is Large ribosomal subunit protein uL16 (Albidiferax ferrireducens (strain ATCC BAA-621 / DSM 15236 / T118) (Rhodoferax ferrireducens)).